Reading from the N-terminus, the 803-residue chain is H(+)/Cl(-) exchange transporter 7 (803 aa).

The segment at 1–46 (MANVSKKVSWSGRDRDDEEGAPLLRRTGQPDEETPLLNGAGPGARQ) is disordered. Residues 1–124 (MANVSKKVSW…TAFRTVEIKR (124 aa)) lie on the Cytoplasmic side of the membrane. Residue Ser9 is modified to Phosphoserine. Helical transmembrane passes span 125 to 157 (WVICALIGILTGLVACFIDIVVENLAGLKYRVI) and 172 to 195 (FSLLLWATLNSAFVLVGSVIVAFI). The Selectivity filter part_1 signature appears at 201-205 (GSGIP). Ser202 contributes to the chloride binding site. An intramembrane region (helical) is located at residues 204–211 (IPQIKCFL). Helical transmembrane passes span 221–239 (RLKTLVIKVSGVILSVVGG) and 245–262 (EGPMIHSGSVIAAGISQG). The Selectivity filter part_2 motif lies at 243 to 247 (GKEGP). Intramembrane regions (helical) lie at residues 286 to 298 (FVSAGAAAGVSAA) and 302 to 310 (PVGGVLFSL). 5 consecutive transmembrane segments (helical) span residues 320-339 (FLTWRIFFASMISTFTLNFV), 373-403 (IPVFIAMGVVGGILGAVFNALNYWLTMFRIR), 408-430 (PCLQVIEAMLVAAVTATVAFVLI), 485-505 (PMTLGLFTLVYFFLACWTYGL), and 510-533 (GVFIPSLLIGAAWGRLFGISMSYL). The short motif at 510–514 (GVFIP) is the Selectivity filter part_3 element. A chloride-binding site is contributed by Phe512. The segment at residues 543-557 (GKYALMGAAAQLGGI) is an intramembrane region (helical). The segment at residues 558-560 (VRM) is an intramembrane region (note=Loop between two helices). The helical intramembrane region spans 561–572 (TLSLTVIMMEAT). Positions 573-576 (SNVT) form an intramembrane region, note=Loop between two helices. A helical membrane pass occupies residues 577–595 (YGFPIMLVLMTAKIVGDVF). The Cytoplasmic segment spans residues 596-803 (IEGLYDMHIQ…GLEELSLAQT (208 aa)). Tyr600 provides a ligand contact to chloride. 2 CBS domains span residues 629 to 693 (MSTP…VFVE) and 739 to 797 (MNPS…GLEE). ATP is bound by residues 656-658 (HNG) and 781-784 (TRKD). Ser799 carries the phosphoserine modification.

The protein belongs to the chloride channel (TC 2.A.49) family. ClC-7/CLCN7 subfamily. Chloride channel 7 are heteromers of alpha (CLCN7) and beta (OSTM1) subunits. In terms of tissue distribution, brain, testis, muscle and kidney.

Its subcellular location is the lysosome membrane. It catalyses the reaction 2 chloride(in) + H(+)(out) = 2 chloride(out) + H(+)(in). Functionally, slowly voltage-gated channel mediating the exchange of chloride ions against protons. Functions as antiporter and contributes to the acidification of the lysosome lumen and may be involved in maintaining lysosomal pH. The CLC channel family contains both chloride channels and proton-coupled anion transporters that exchange chloride or another anion for protons. The presence of conserved gating glutamate residues is typical for family members that function as antiporters. This Rattus norvegicus (Rat) protein is H(+)/Cl(-) exchange transporter 7 (Clcn7).